Consider the following 445-residue polypeptide: Exodeoxyribonuclease 7 large subunit (445 aa).

Belongs to the XseA family. As to quaternary structure, heterooligomer composed of large and small subunits.

Its subcellular location is the cytoplasm. The catalysed reaction is Exonucleolytic cleavage in either 5'- to 3'- or 3'- to 5'-direction to yield nucleoside 5'-phosphates.. In terms of biological role, bidirectionally degrades single-stranded DNA into large acid-insoluble oligonucleotides, which are then degraded further into small acid-soluble oligonucleotides. The chain is Exodeoxyribonuclease 7 large subunit from Delftia acidovorans (strain DSM 14801 / SPH-1).